Reading from the N-terminus, the 62-residue chain is Prokaryotic ubiquitin-like protein Pup (62 aa).

The segment at 1 to 29 (MSQQSLNAPGPGAEDGNDPEAVTGGQTFA) is disordered. Residues 21 to 56 (AVTGGQTFASAQAADDLLDEIDSVLESNAETFVRSF) form an ARC ATPase binding region. Residue glutamine 62 is modified to Deamidated glutamine. An Isoglutamyl lysine isopeptide (Gln-Lys) (interchain with K-? in acceptor proteins) cross-link involves residue glutamine 62.

It belongs to the prokaryotic ubiquitin-like protein family. As to quaternary structure, strongly interacts with the proteasome-associated ATPase ARC through a hydrophobic interface; the interacting region of Pup lies in its C-terminal half. There is one Pup binding site per ARC hexamer ring. Post-translationally, is modified by deamidation of its C-terminal glutamine to glutamate by the deamidase Dop, a prerequisite to the subsequent pupylation process.

Its pathway is protein degradation; proteasomal Pup-dependent pathway. In terms of biological role, protein modifier that is covalently attached to lysine residues of substrate proteins, thereby targeting them for proteasomal degradation. The tagging system is termed pupylation. The polypeptide is Prokaryotic ubiquitin-like protein Pup (Brachybacterium faecium (strain ATCC 43885 / DSM 4810 / JCM 11609 / LMG 19847 / NBRC 14762 / NCIMB 9860 / 6-10)).